The primary structure comprises 368 residues: tRNA-specific 2-thiouridylase MnmA (368 aa).

ATP-binding positions include glycine 12–serine 19 and methionine 38. Residues asparagine 98 to aspartate 100 are interaction with target base in tRNA. Residue cysteine 103 is the Nucleophile of the active site. Cysteines 103 and 200 form a disulfide. Glycine 128 contacts ATP. Positions lysine 150–glutamine 152 are interaction with tRNA. Cysteine 200 serves as the catalytic Cysteine persulfide intermediate. Positions arginine 313–tyrosine 314 are interaction with tRNA.

The protein belongs to the MnmA/TRMU family. Interacts with TusE.

Its subcellular location is the cytoplasm. It carries out the reaction S-sulfanyl-L-cysteinyl-[protein] + uridine(34) in tRNA + AH2 + ATP = 2-thiouridine(34) in tRNA + L-cysteinyl-[protein] + A + AMP + diphosphate + H(+). Functionally, catalyzes the 2-thiolation of uridine at the wobble position (U34) of tRNA(Lys), tRNA(Glu) and tRNA(Gln), leading to the formation of s(2)U34, the first step of tRNA-mnm(5)s(2)U34 synthesis. Sulfur is provided by IscS, via a sulfur-relay system. Binds ATP and its substrate tRNAs. The sequence is that of tRNA-specific 2-thiouridylase MnmA from Pectobacterium carotovorum subsp. carotovorum (strain PC1).